Consider the following 147-residue polypeptide: 3-dehydroquinate dehydratase (147 aa).

Tyr-23 functions as the Proton acceptor in the catalytic mechanism. Positions 74, 80, and 87 each coordinate substrate. The active-site Proton donor is His-100. Residues 101-102 (LS) and Arg-111 contribute to the substrate site.

This sequence belongs to the type-II 3-dehydroquinase family. In terms of assembly, homododecamer.

It catalyses the reaction 3-dehydroquinate = 3-dehydroshikimate + H2O. It participates in metabolic intermediate biosynthesis; chorismate biosynthesis; chorismate from D-erythrose 4-phosphate and phosphoenolpyruvate: step 3/7. Its function is as follows. Catalyzes a trans-dehydration via an enolate intermediate. This chain is 3-dehydroquinate dehydratase, found in Clostridium botulinum (strain Okra / Type B1).